Consider the following 710-residue polypeptide: Probable GTP diphosphokinase RSH2, chloroplastic (710 aa).

A chloroplast-targeting transit peptide spans 1–63 (MVVATTIALY…SSLFSSASVK (63 aa)). Residues 233–337 (YLQHCVETAM…IKLADRLHNM (105 aa)) form the HD domain.

This sequence belongs to the RelA/SpoT family.

Its subcellular location is the plastid. The protein localises to the chloroplast. The catalysed reaction is GTP + ATP = guanosine 3'-diphosphate 5'-triphosphate + AMP. Its function is as follows. Probable ppGpp (guanosine 3'-diphosphate 5'-diphosphate) synthetase that may be involved in a rapid plant ppGpp-mediated response to pathogens and other stresses. This is Probable GTP diphosphokinase RSH2, chloroplastic (RSH2) from Arabidopsis thaliana (Mouse-ear cress).